Here is a 359-residue protein sequence, read N- to C-terminus: Type-1 angiotensin II receptor (359 aa).

Residues methionine 1 to serine 25 are Extracellular-facing. N-linked (GlcNAc...) asparagine glycosylation occurs at asparagine 4. An angiotensin II-binding site is contributed by aspartate 17. Disulfide bonds link cysteine 18/cysteine 274 and cysteine 101/cysteine 180. Residues tyrosine 26 to cysteine 55 form a helical membrane-spanning segment. Residues tyrosine 56–threonine 61 are Cytoplasmic-facing. The helical transmembrane segment at valine 62 to alanine 89 threads the bilayer. Residues methionine 90–asparagine 98 are Extracellular-facing. Residues cysteine 99 to aspartate 125 form a helical membrane-spanning segment. Over arginine 126–threonine 141 the chain is Cytoplasmic. Residues methionine 142 to isoleucine 165 form a helical membrane-spanning segment. Over histidine 166 to threonine 190 the chain is Extracellular. Arginine 167 lines the angiotensin II pocket. N-linked (GlcNAc...) asparagine glycosylation is present at asparagine 176. Residues phenylalanine 182 and tyrosine 184 each contribute to the angiotensin II site. N-linked (GlcNAc...) asparagine glycosylation is found at asparagine 187 and asparagine 188. A helical membrane pass occupies residues leucine 191 to threonine 216. Lysine 199 provides a ligand contact to angiotensin II. Topologically, residues leucine 217–phenylalanine 239 are cytoplasmic. Residues lysine 240–leucine 268 form a helical membrane-spanning segment. Over histidine 269–aspartate 278 the chain is Extracellular. The chain crosses the membrane as a helical span at residues isoleucine 279 to phenylalanine 304. Over phenylalanine 305–glutamate 359 the chain is Cytoplasmic.

This sequence belongs to the G-protein coupled receptor 1 family. Post-translationally, C-terminal Ser or Thr residues may be phosphorylated.

It is found in the cell membrane. Its function is as follows. Receptor for angiotensin II, a vasoconstricting peptide, which acts as a key regulator of blood pressure and sodium retention by the kidney. The activated receptor in turn couples to G-alpha proteins G(q) (GNAQ, GNA11, GNA14 or GNA15) and thus activates phospholipase C and increases the cytosolic Ca(2+) concentrations, which in turn triggers cellular responses such as stimulation of protein kinase C. The protein is Type-1 angiotensin II receptor (AGTR1) of Gallus gallus (Chicken).